We begin with the raw amino-acid sequence, 2489 residues long: Protein YPR117W (2489 aa).

Helical transmembrane passes span 19 to 39 (FMLF…WILM) and 128 to 148 (VLSI…LALT). N-linked (GlcNAc...) asparagine glycans are attached at residues Asn-191, Asn-210, Asn-311, Asn-452, Asn-468, Asn-605, Asn-638, Asn-663, Asn-698, Asn-789, Asn-835, Asn-981, Asn-1255, Asn-1404, and Asn-1476. Positions 1610–1676 (LTQEKLATER…RLHTVNTILS (67 aa)) form a coiled coil. The tract at residues 1685 to 1704 (PGGNTDGDSSSSLSDTDVNL) is disordered. Residues 1690–1704 (DGDSSSSLSDTDVNL) show a composition bias toward low complexity. Residues Asn-1978 and Asn-2189 are each glycosylated (N-linked (GlcNAc...) asparagine). Phosphoserine occurs at positions 2254 and 2278. The N-linked (GlcNAc...) asparagine glycan is linked to Asn-2279. A compositionally biased stretch (polar residues) spans 2451-2471 (SSTHSSDIRSINSDETYNEND). The interval 2451-2489 (SSTHSSDIRSINSDETYNENDGNGVKPFYPVTSEFSKNK) is disordered.

The protein resides in the cell membrane. Its subcellular location is the endoplasmic reticulum membrane. The protein localises to the mitochondrion membrane. Tube-forming lipid transport protein which may bind to phosphatidylinositols and may affect phosphatidylinositol-4,5-bisphosphate (PtdIns-4,5-P2) distribution. The protein is Protein YPR117W of Saccharomyces cerevisiae (strain ATCC 204508 / S288c) (Baker's yeast).